The chain runs to 481 residues: Cysteine--tRNA ligase (481 aa).

Residue Cys-29 participates in Zn(2+) binding. The 'HIGH' region motif lies at 31–41; that stretch reads PTVYDYSHLGH. Zn(2+) is bound by residues Cys-210, His-235, and Glu-239. The short motif at 272 to 276 is the 'KMSKS' region element; sequence KMSKS. ATP is bound at residue Lys-275.

This sequence belongs to the class-I aminoacyl-tRNA synthetase family. As to quaternary structure, monomer. Zn(2+) serves as cofactor.

The protein resides in the cytoplasm. It carries out the reaction tRNA(Cys) + L-cysteine + ATP = L-cysteinyl-tRNA(Cys) + AMP + diphosphate. The protein is Cysteine--tRNA ligase of Anaeromyxobacter dehalogenans (strain 2CP-1 / ATCC BAA-258).